A 403-amino-acid polypeptide reads, in one-letter code: Large ribosomal subunit protein uL3 (403 aa).

The interval 1-38 is disordered; sequence MSHRKFSAPRHGSLGFLPRKRSSRHRGKVKSFPKDDSS. Serine 13 bears the Phosphoserine mark. The span at 18–31 shows a compositional bias: basic residues; it reads PRKRSSRHRGKVKS. A Glycyl lysine isopeptide (Lys-Gly) (interchain with G-Cter in SUMO2) cross-link involves residue lysine 39. The residue at position 136 (lysine 136) is an N6-acetyllysine. Residues lysine 224 and lysine 226 each participate in a glycyl lysine isopeptide (Lys-Gly) (interchain with G-Cter in SUMO2) cross-link. A Tele-methylhistidine modification is found at histidine 245. N6-acetyllysine; alternate is present on residues lysine 286 and lysine 294. Lysine 286 is covalently cross-linked (Glycyl lysine isopeptide (Lys-Gly) (interchain with G-Cter in SUMO2); alternate). Lysine 294 participates in a covalent cross-link: Glycyl lysine isopeptide (Lys-Gly) (interchain with G-Cter in SUMO1); alternate. Serine 304 carries the post-translational modification Phosphoserine. Lysine 366 carries the N6-acetyllysine; alternate modification. A Glycyl lysine isopeptide (Lys-Gly) (interchain with G-Cter in SUMO2); alternate cross-link involves residue lysine 366. Position 373 is an N6-acetyllysine (lysine 373). Glycyl lysine isopeptide (Lys-Gly) (interchain with G-Cter in SUMO2) cross-links involve residues lysine 386, lysine 393, and lysine 399.

This sequence belongs to the universal ribosomal protein uL3 family. As to quaternary structure, component of the large ribosomal subunit. Interacts with DHX33. Post-translationally, constitutively monomethylated at His-245 by METTL18. Methylation at His-245 regulates translation elongation by slowing ribosome traversal on tyrosine codons: slower elongation provides enough time for proper folding of synthesized proteins and prevents cellular aggregation of tyrosine-rich proteins It is not required for incorporation of RPL3 into ribosomes.

It localises to the nucleus. It is found in the nucleolus. The protein localises to the cytoplasm. In terms of biological role, component of the large ribosomal subunit. The ribosome is a large ribonucleoprotein complex responsible for the synthesis of proteins in the cell. The polypeptide is Large ribosomal subunit protein uL3 (RPL3) (Bos taurus (Bovine)).